Consider the following 135-residue polypeptide: Small ribosomal subunit protein uS12 (135 aa).

Residues 1-20 (MPTINQLVRKGRHSKVTKSK) form a disordered region. Residues 9–18 (RKGRHSKVTK) are compositionally biased toward basic residues.

This sequence belongs to the universal ribosomal protein uS12 family. As to quaternary structure, part of the 30S ribosomal subunit. Contacts proteins S8 and S17. May interact with IF1 in the 30S initiation complex.

Functionally, with S4 and S5 plays an important role in translational accuracy. Interacts with and stabilizes bases of the 16S rRNA that are involved in tRNA selection in the A site and with the mRNA backbone. Located at the interface of the 30S and 50S subunits, it traverses the body of the 30S subunit contacting proteins on the other side and probably holding the rRNA structure together. The combined cluster of proteins S8, S12 and S17 appears to hold together the shoulder and platform of the 30S subunit. The sequence is that of Small ribosomal subunit protein uS12 from Lactobacillus acidophilus (strain ATCC 700396 / NCK56 / N2 / NCFM).